The sequence spans 308 residues: Oxygen-dependent coproporphyrinogen-III oxidase (308 aa).

Ser-94 is a binding site for substrate. 2 residues coordinate a divalent metal cation: His-98 and His-108. His-108 acts as the Proton donor in catalysis. 110–112 (NVR) provides a ligand contact to substrate. His-147 and His-177 together coordinate a divalent metal cation. The tract at residues 242–277 (YVEFNLVWDRGTLFGLQTGGRTESILMSMPPLVRWE) is important for dimerization. A substrate-binding site is contributed by 260-262 (GGR).

The protein belongs to the aerobic coproporphyrinogen-III oxidase family. In terms of assembly, homodimer. A divalent metal cation is required as a cofactor.

It is found in the cytoplasm. It catalyses the reaction coproporphyrinogen III + O2 + 2 H(+) = protoporphyrinogen IX + 2 CO2 + 2 H2O. Its pathway is porphyrin-containing compound metabolism; protoporphyrin-IX biosynthesis; protoporphyrinogen-IX from coproporphyrinogen-III (O2 route): step 1/1. Involved in the heme biosynthesis. Catalyzes the aerobic oxidative decarboxylation of propionate groups of rings A and B of coproporphyrinogen-III to yield the vinyl groups in protoporphyrinogen-IX. The sequence is that of Oxygen-dependent coproporphyrinogen-III oxidase from Yersinia enterocolitica serotype O:8 / biotype 1B (strain NCTC 13174 / 8081).